We begin with the raw amino-acid sequence, 294 residues long: N-acetylmuramic acid 6-phosphate etherase (294 aa).

An SIS domain is found at 54–217; the sequence is VIKSFEEEGR…STASMIGVGK (164 aa). The active-site Proton donor is glutamate 82. Glutamate 113 is a catalytic residue.

Belongs to the GCKR-like family. MurNAc-6-P etherase subfamily. Homodimer.

The enzyme catalyses N-acetyl-D-muramate 6-phosphate + H2O = N-acetyl-D-glucosamine 6-phosphate + (R)-lactate. It participates in amino-sugar metabolism; N-acetylmuramate degradation. In terms of biological role, specifically catalyzes the cleavage of the D-lactyl ether substituent of MurNAc 6-phosphate, producing GlcNAc 6-phosphate and D-lactate. The sequence is that of N-acetylmuramic acid 6-phosphate etherase from Bacillus cereus (strain ATCC 10987 / NRS 248).